A 101-amino-acid polypeptide reads, in one-letter code: Protein RnfH (101 aa).

Belongs to the UPF0125 (RnfH) family.

The chain is Protein RnfH from Coxiella burnetii (strain CbuK_Q154) (Coxiella burnetii (strain Q154)).